Here is a 360-residue protein sequence, read N- to C-terminus: Alpha-N-acetyl-neuraminyl-2,3-beta-galactosyl-1,3-N-acetyl-galactosaminide alpha-2,6-sialyltransferase (360 aa).

Topologically, residues 1–71 (MEHVVTCWRL…PGRLLLLTLC (71 aa)) are cytoplasmic. Residues 72–94 (ILTFSAVCVFLCCWACLPLCLAT) form a helical; Signal-anchor for type II membrane protein membrane-spanning segment. At 95 to 360 (CLDRHLPAAP…VFAHPSWRAK (266 aa)) the chain is on the lumenal side. Cysteines 134 and 283 form a disulfide. The N-linked (GlcNAc...) asparagine glycan is linked to Asn-193.

This sequence belongs to the glycosyltransferase 29 family. In terms of tissue distribution, high expression in brain and colon and to a lesser extent in lung, heart, kidney, spleen and thymus.

It localises to the golgi apparatus membrane. The enzyme catalyses an alpha-Neu5Ac-(2-&gt;3)-beta-D-Gal-(1-&gt;3)-D-GlcNAc derivative + CMP-N-acetyl-beta-neuraminate = an alpha-Neu5Ac-(2-&gt;3)-beta-D-Gal-(1-&gt;3)-[alpha-Neu5Ac-(2-&gt;6)]-D-GlcNAc derivative + CMP + H(+). The catalysed reaction is N-acetyl-alpha-neuraminosyl-(2-&gt;3)-beta-D-galactosyl-(1-&gt;3)-N-acetyl-D-galactosamine + CMP-N-acetyl-beta-neuraminate = N-acetyl-alpha-neuraminosyl-(2-&gt;3)-beta-D-galactosyl-(1-&gt;3)-[N-acetyl-alpha-neuraminosyl-(2-&gt;6)]-N-acetyl-D-galactosamine + CMP + H(+). It carries out the reaction a ganglioside GM1b (d18:1(4E)) + CMP-N-acetyl-beta-neuraminate = a ganglioside GD1alpha (d18:1(4E)) + CMP + H(+). It catalyses the reaction 3-O-[alpha-Neu5Ac-(2-&gt;3)-beta-D-Gal-(1-&gt;3)-alpha-D-GalNAc]-L-Ser-[protein] + CMP-N-acetyl-beta-neuraminate = a 3-O-{alpha-Neu5Ac-(2-&gt;3)-beta-D-Gal-(1-&gt;3)-[alpha-Neu5Ac-(2-&gt;6)]-alpha-D-GalNAc}-L-seryl-[protein] + CMP + H(+). The enzyme catalyses 3-O-[alpha-Neu5Ac-(2-&gt;3)-beta-D-Gal-(1-&gt;3)-alpha-D-GalNAc]-L-Thr-[protein] + CMP-N-acetyl-beta-neuraminate = a 3-O-{alpha-Neu5Ac-(2-&gt;3)-beta-D-Gal-(1-&gt;3)-[alpha-Neu5Ac-(2-&gt;6)]-alpha-D-GalNAc}-L-threonyl-[protein] + CMP + H(+). The protein operates within protein modification; protein glycosylation. Its pathway is glycolipid biosynthesis. Its function is as follows. Transfers the sialyl group (N-acetyl-alpha-neuraminyl or NeuAc) from CMP-NeuAc to the GalNAc residue on the NeuAc-alpha-2,3-Gal-beta-1,3-GalNAc sequence of glycoproteins and glycolipids forming an alpha-2,6-linkage. Produces branched type disialyl structures by transfer of a sialyl group onto a GalNAc residue inside the backbone core chains. Prefers O-glycans to glycoproteins or glycolipids. The protein is Alpha-N-acetyl-neuraminyl-2,3-beta-galactosyl-1,3-N-acetyl-galactosaminide alpha-2,6-sialyltransferase (St6galnac4) of Mus musculus (Mouse).